The following is a 456-amino-acid chain: Probable glycine dehydrogenase (decarboxylating) subunit 1 (456 aa).

It belongs to the GcvP family. N-terminal subunit subfamily. As to quaternary structure, the glycine cleavage system is composed of four proteins: P, T, L and H. In this organism, the P 'protein' is a heterodimer of two subunits.

The catalysed reaction is N(6)-[(R)-lipoyl]-L-lysyl-[glycine-cleavage complex H protein] + glycine + H(+) = N(6)-[(R)-S(8)-aminomethyldihydrolipoyl]-L-lysyl-[glycine-cleavage complex H protein] + CO2. In terms of biological role, the glycine cleavage system catalyzes the degradation of glycine. The P protein binds the alpha-amino group of glycine through its pyridoxal phosphate cofactor; CO(2) is released and the remaining methylamine moiety is then transferred to the lipoamide cofactor of the H protein. This is Probable glycine dehydrogenase (decarboxylating) subunit 1 from Legionella pneumophila (strain Corby).